The following is a 231-amino-acid chain: NADH-ubiquinone oxidoreductase chain 4 (231 aa).

6 consecutive transmembrane segments (helical) span residues 1–21, 34–54, 63–85, 89–111, 124–146, and 169–189; these read PIAG…YGII, LFLP…LTCL, IAYS…TPWG, AMAL…NMTY, GLHN…NIAI, and TIII…HMFL.

It belongs to the complex I subunit 4 family.

The protein localises to the mitochondrion membrane. It carries out the reaction a ubiquinone + NADH + 5 H(+)(in) = a ubiquinol + NAD(+) + 4 H(+)(out). Functionally, core subunit of the mitochondrial membrane respiratory chain NADH dehydrogenase (Complex I) that is believed to belong to the minimal assembly required for catalysis. Complex I functions in the transfer of electrons from NADH to the respiratory chain. The immediate electron acceptor for the enzyme is believed to be ubiquinone. The sequence is that of NADH-ubiquinone oxidoreductase chain 4 (MT-ND4) from Crotalus lepidus (Banded rock rattlesnake).